Here is a 30-residue protein sequence, read N- to C-terminus: Photosystem I reaction center subunit XII (30 aa).

Residues 7–29 (VYIALMAALLASVLAIRLGATLY) form a helical membrane-spanning segment.

The protein belongs to the PsaM family.

It localises to the plastid. The protein localises to the chloroplast thylakoid membrane. The chain is Photosystem I reaction center subunit XII from Thalassiosira pseudonana (Marine diatom).